We begin with the raw amino-acid sequence, 879 residues long: Metabotropic glutamate receptor 3 (879 aa).

The first 22 residues, 1 to 22, serve as a signal peptide directing secretion; it reads MKMLTRLQILMLALFSKGFLLS. The Extracellular portion of the chain corresponds to 23–576; that stretch reads LGDHNFMRRE…EDYIKWEDAW (554 aa). C57 and C99 are disulfide-bonded. L-glutamate contacts are provided by residues R68, S151, and 172–174; that span reads AST. N-linked (GlcNAc...) asparagine glycosylation occurs at N209. Y222 serves as a coordination point for L-glutamate. 7 disulfide bridges follow: C240–C527, C361–C373, C412–C419, C509–C528, C513–C531, C534–C546, and C549–C562. N292 carries N-linked (GlcNAc...) asparagine glycosylation. D301 is an L-glutamate binding site. Position 389 (K389) interacts with L-glutamate. Residues N414 and N439 are each glycosylated (N-linked (GlcNAc...) asparagine). Residues 577 to 599 form a helical membrane-spanning segment; that stretch reads AIGPVTIACLGFLCTCIVITVFI. Residues 600-613 are Cytoplasmic-facing; that stretch reads KHNNTPLVKASGRE. Residues 614–634 traverse the membrane as a helical segment; it reads LCYILLFGVSLSYCMTFFFIA. The Extracellular segment spans residues 635–645; the sequence is KPSPVICALRR. A helical membrane pass occupies residues 646–664; that stretch reads LGLGTSFAICYSALLTKTN. The Cytoplasmic portion of the chain corresponds to 665–688; it reads CIARIFDGVKNGAQRPKFISPSSQ. The helical transmembrane segment at 689 to 709 threads the bilayer; that stretch reads VFICLGLILVQIVMVSVWLIL. The Extracellular segment spans residues 710–734; the sequence is ETPGTRRYTLPEKRETVILKCNVKD. The chain crosses the membrane as a helical span at residues 735–756; that stretch reads SSMLISLTYDVVLVILCTVYAF. The Cytoplasmic portion of the chain corresponds to 757–769; sequence KTRKCPENFNEAK. The chain crosses the membrane as a helical span at residues 770–792; it reads FIGFTMYTTCIIWLAFLPIFYVT. Over 793 to 802 the chain is Extracellular; that stretch reads SSDYRVQTTT. The helical transmembrane segment at 803 to 828 threads the bilayer; it reads MCISVSLSGFVVLGCLFAPKVHIVLF. At 829–879 the chain is on the cytoplasmic side; the sequence is QPQKNVVTHRLHLNRFSVSGTATTYSQSSASTYVPTVCNGREVLDSTTSSL.

This sequence belongs to the G-protein coupled receptor 3 family. In terms of assembly, interacts with TAMALIN. In terms of tissue distribution, is widely distributed in the CNS. Predominant expression is seen in the neuronal cells of the cerebral cortex, dentate gyrus, and glial cells throughout brain regions.

It localises to the cell membrane. Its function is as follows. G-protein coupled receptor for glutamate. Ligand binding causes a conformation change that triggers signaling via guanine nucleotide-binding proteins (G proteins) and modulates the activity of down-stream effectors. Signaling inhibits adenylate cyclase activity. This Rattus norvegicus (Rat) protein is Metabotropic glutamate receptor 3 (Grm3).